Consider the following 198-residue polypeptide: Ribonuclease HII (198 aa).

The 189-residue stretch at H10–C198 folds into the RNase H type-2 domain. D16, E17, and D108 together coordinate a divalent metal cation.

Belongs to the RNase HII family. It depends on Mn(2+) as a cofactor. Mg(2+) serves as cofactor.

It localises to the cytoplasm. It carries out the reaction Endonucleolytic cleavage to 5'-phosphomonoester.. Endonuclease that specifically degrades the RNA of RNA-DNA hybrids. This chain is Ribonuclease HII, found in Enterobacter sp. (strain 638).